A 538-amino-acid chain; its full sequence is MAVVSKKIPAPDKVKIRTALLSVSDKTDIIELATVLSKLGVKLLSTGGTAKAIAEAGLAVTDVSDVTNFPEIMDGRVKTLHPNVHGGLLAIRDDAEHVEAMKAHGIEAIDLSVINLYPFEEVRAKGGDYPTTVENIDIGGPAMIRASAKNHAYVTVVTDPSDYPALVEALQADDGQTSYALRQRFAAKAYARTAAYDAVISNWFAEALAIETPHYRAIGGVLKEKMRYGENPHQSAGFYLTGEKRPGVATATLLQGKQLSYNNINDTDAAYELVAEFLPENAPAVAIVKHANPCGVATGPTLAEAYRRALACDSVSAFGGVIALNRTLDAETAEEIVKLFTEVIIAPDVTEEAKSIIARKPNLRLLAAGGLPDPRAAGLTAKTVSGGLLVQSRDNGMVEDLELKVVTKRAPTAQELEDMKFAFKIAKHVKSNAVIYAKDGQTAGIGAGQMSRVDSARIAAQKAEDAAKALGLAEPLTRGSAVASEAFYPFADGLLAAIAAGATAVIQPGGSMRDQDVIDAANEHNVAMVFTGMRHFRH.

The 151-residue stretch at 8–158 (IPAPDKVKIR…KNHAYVTVVT (151 aa)) folds into the MGS-like domain.

It belongs to the PurH family.

The enzyme catalyses (6R)-10-formyltetrahydrofolate + 5-amino-1-(5-phospho-beta-D-ribosyl)imidazole-4-carboxamide = 5-formamido-1-(5-phospho-D-ribosyl)imidazole-4-carboxamide + (6S)-5,6,7,8-tetrahydrofolate. The catalysed reaction is IMP + H2O = 5-formamido-1-(5-phospho-D-ribosyl)imidazole-4-carboxamide. Its pathway is purine metabolism; IMP biosynthesis via de novo pathway; 5-formamido-1-(5-phospho-D-ribosyl)imidazole-4-carboxamide from 5-amino-1-(5-phospho-D-ribosyl)imidazole-4-carboxamide (10-formyl THF route): step 1/1. It functions in the pathway purine metabolism; IMP biosynthesis via de novo pathway; IMP from 5-formamido-1-(5-phospho-D-ribosyl)imidazole-4-carboxamide: step 1/1. This Agrobacterium fabrum (strain C58 / ATCC 33970) (Agrobacterium tumefaciens (strain C58)) protein is Bifunctional purine biosynthesis protein PurH.